The primary structure comprises 2097 residues: SCAR-like protein 1 (2097 aa).

Disordered stretches follow at residues 205-227, 544-565, 1443-1467, 1588-1616, 1730-1802, 1820-1842, and 1893-1944; these read IANSESHTTSKDRSSRKVPPRTT, AHSSDKQSSQKSSGLDGSSIES, SQIASCSPTPSNEKIDELNAPPLSS, STEETYRLSSPVPPPNEPFSNVSYEDPQK, QERV…EKTV, ASSHVSENGCNQQSHGESLPVTS, and YEGP…EGGY. Low complexity predominate over residues 549-562; it reads KQSSQKSSGLDGSS. Polar residues predominate over residues 1443-1454; that stretch reads SQIASCSPTPSN. The span at 1766-1794 shows a compositional bias: polar residues; it reads SISQQGLQGSVFPSDTSDNGEHSSYTSRA. Residues 1908–1922 show a composition bias toward basic and acidic residues; the sequence is YPHDDHNSEKEDIHQ. Positions 2028–2046 constitute a WH2 domain; it reads ERNLLLEQIRNKTFNLKPV.

This sequence belongs to the SCAR/WAVE family.

Its subcellular location is the cytoplasm. It localises to the cytoskeleton. Involved in regulation of actin and microtubule organization. Part of a WAVE complex that activates the Arp2/3 complex. The polypeptide is SCAR-like protein 1 (Oryza sativa subsp. japonica (Rice)).